We begin with the raw amino-acid sequence, 398 residues long: Putative L-rhamnonate dehydratase (398 aa).

Substrate-binding residues include histidine 29 and arginine 55. 3 residues coordinate Mg(2+): aspartate 221, glutamate 247, and glutamate 274. Histidine 324 functions as the Proton acceptor in the catalytic mechanism. Glutamate 344 contributes to the substrate binding site.

It belongs to the mandelate racemase/muconate lactonizing enzyme family. RhamD subfamily. Mg(2+) is required as a cofactor.

It catalyses the reaction L-rhamnonate = 2-dehydro-3-deoxy-L-rhamnonate + H2O. Functionally, catalyzes the dehydration of L-rhamnonate to 2-keto-3-deoxy-L-rhamnonate (KDR). In Caldivirga maquilingensis (strain ATCC 700844 / DSM 13496 / JCM 10307 / IC-167), this protein is Putative L-rhamnonate dehydratase.